A 231-amino-acid polypeptide reads, in one-letter code: Achaete-scute homolog 1 (231 aa).

Disordered stretches follow at residues 1–24 (MESS…FLPP) and 39–92 (AAAA…PELM). Residues 39–51 (AAAAAQSAQQQQP) are compositionally biased toward low complexity. The segment covering 76-85 (SAAKQVKRQR) has biased composition (basic residues). The region spanning 113–165 (AAVARRNERERNRVKLVNLGFATLREHVPNGAANKKMSKVETLRSAVEYIRAL) is the bHLH domain. Residue Lys151 is modified to N6-acetyllysine.

As to quaternary structure, efficient DNA binding requires dimerization with another bHLH protein. Forms a heterodimer with TCF3. As to expression, developing CNS and PNS at embryonic and postnatal stages. Expressed in the epithelium of glandular stomach.

The protein resides in the nucleus. In terms of biological role, transcription factor that plays a key role in neuronal differentiation: acts as a pioneer transcription factor, accessing closed chromatin to allow other factors to bind and activate neural pathways. Directly binds the E box motif (5'-CANNTG-3') on promoters and promotes transcription of neuronal genes. The combination of three transcription factors, ASCL1, POU3F2/BRN2 and MYT1L, is sufficient to reprogram fibroblasts and other somatic cells into induced neuronal (iN) cells in vitro. Plays a role at early stages of development of specific neural lineages in most regions of the CNS, and of several lineages in the PNS. Essential for the generation of olfactory and autonomic neurons. Acts synergistically with FOXN4 to specify the identity of V2b neurons rather than V2a from bipotential p2 progenitors during spinal cord neurogenesis, probably through DLL4-NOTCH signaling activation. Involved in the regulation of neuroendocrine cell development in the glandular stomach. In Mus musculus (Mouse), this protein is Achaete-scute homolog 1.